A 343-amino-acid chain; its full sequence is ELAV-like protein 3 (343 aa).

RRM domains lie at 35 to 113 (TNLI…YARP), 121 to 202 (ANLY…FANN), and 260 to 338 (WCIF…FKTS).

This sequence belongs to the RRM elav family.

Functionally, RNA-binding protein that binds to AU-rich sequences (AREs) of target mRNAs. May also bind poly-A tracts via RRM 3. May be involved in neuronal differentiation and maintenance. The polypeptide is ELAV-like protein 3 (Xenopus tropicalis (Western clawed frog)).